The sequence spans 227 residues: Protein MobD (227 aa).

The sequence is that of Protein MobD (mobD) from Acidithiobacillus ferrooxidans (Thiobacillus ferrooxidans).